The sequence spans 943 residues: Conidiophore development regulator abaA (943 aa).

2 disordered regions span residues 1-69 (MSSS…FNGG) and 111-133 (TSRQ…HQRG). A compositionally biased stretch (basic and acidic residues) spans 29-43 (IDTRRSFHGDSRLPL). Over residues 59 to 68 (PSSAHSSFNG) the composition is skewed to polar residues. Residues 161–254 (QKDKGGVWRR…QVVKKFFEDL (94 aa)) constitute a DNA-binding region (TEA). Residues 537–555 (EHQRKKEKRSCGKKPDLER) are compositionally biased toward basic and acidic residues. Disordered stretches follow at residues 537 to 575 (EHQR…AAWT) and 809 to 901 (GAAG…HHPG). A compositionally biased stretch (low complexity) spans 865-889 (DSWTAGSSAGGAPAATPTGPDWGPT).

This sequence belongs to the TEC1 family.

The protein localises to the nucleus. In terms of biological role, brlA, abaA and wetA are pivotal regulators of conidiophore development and conidium maturation. They act individually and together to regulate their own expression and that of numerous other sporulation-specific genes. Binds to the sequence 5'-CATTCY-3', where Y is a pyrimidine, making both major- and minor-groove contacts. This Hapsidospora chrysogena (Acremonium chrysogenum) protein is Conidiophore development regulator abaA.